The following is a 122-amino-acid chain: Aspartate 1-decarboxylase (122 aa).

The active-site Schiff-base intermediate with substrate; via pyruvic acid is Ser-25. Position 25 is a pyruvic acid (Ser) (Ser-25). Thr-57 serves as a coordination point for substrate. Catalysis depends on Tyr-58, which acts as the Proton donor. 73 to 75 (GAA) provides a ligand contact to substrate.

Belongs to the PanD family. In terms of assembly, heterooctamer of four alpha and four beta subunits. Pyruvate serves as cofactor. Is synthesized initially as an inactive proenzyme, which is activated by self-cleavage at a specific serine bond to produce a beta-subunit with a hydroxyl group at its C-terminus and an alpha-subunit with a pyruvoyl group at its N-terminus.

Its subcellular location is the cytoplasm. It catalyses the reaction L-aspartate + H(+) = beta-alanine + CO2. It functions in the pathway cofactor biosynthesis; (R)-pantothenate biosynthesis; beta-alanine from L-aspartate: step 1/1. In terms of biological role, catalyzes the pyruvoyl-dependent decarboxylation of aspartate to produce beta-alanine. This is Aspartate 1-decarboxylase from Bordetella parapertussis (strain 12822 / ATCC BAA-587 / NCTC 13253).